We begin with the raw amino-acid sequence, 590 residues long: MREMNLLVTSSLGVLLHLVVLCQADDDSELLVNTKSGKVMRTRIPVLSSHISAFLGIPFAEPPVGNMRFRRPEPKKPWSGVWNASTYPNNCQQYVDEQFPGFPGSEMWNPNREMSEDCLYLNIWVPSPRPKSATVMLWIYGGGFYSGSSTLDVYNGKYLAYTEEVVLVSLSYRVGAFGFLALHGSQEAPGNMGLLDQRMALQWVHDNIQFFGGDPKTVTLFGESAGRASVGMHILSPGSRDLFRRAILQSGSPNCPWASVSVAEGRRRAVELRRNLNCNLNSDEDLIQCLREKKPQELIDVEWNVLPFDSIFRFSFVPVIDGEFFPTSLESMLNAGNFKKTQILLGVNKDEGSFFLLYGAPGFSKDSESKISREDFMSGVKLSVPHANDLGLDAVTLQYTDWMDDNNGIKNRDGLDDIVGDHNVICPLMHFVNKYTKFGNGTYLYFFNHRASNLVWPEWMGVIHGYEIEFVFGLPLVKELNYTAEEEALSRRIMHYWATFAKTGNPNEPHSQESKWPLFTTKEQKFIDLNTEPIKVHQRLRVQMCVFWNQFLPKLLNATACDGELSSSGTSSSKGIIFYVLFSILYLIFY.

The first 24 residues, 1–24, serve as a signal peptide directing secretion; sequence MREMNLLVTSSLGVLLHLVVLCQA. The N-linked (GlcNAc...) asparagine glycan is linked to asparagine 83. Residues cysteine 91 and cysteine 118 are joined by a disulfide bond. The Acyl-ester intermediate role is filled by serine 224. A disulfide bridge connects residues cysteine 278 and cysteine 289. Glutamate 351 serves as the catalytic Charge relay system. Cysteines 426 and 545 form a disulfide. Asparagine 440 carries an N-linked (GlcNAc...) asparagine glycan. Histidine 464 (charge relay system) is an active-site residue. N-linked (GlcNAc...) asparagine glycosylation is found at asparagine 481 and asparagine 557. Residue serine 567 is the site of GPI-anchor amidated serine attachment. A propeptide spans 568–590 (removed in mature form); it reads SGTSSSKGIIFYVLFSILYLIFY.

The protein belongs to the type-B carboxylesterase/lipase family. Isoform H form is a homodimer; the asymmetric form is a disulfide-bonded oligomer composed of a collagenic subunit (Q) and a variable number of T catalytic subunits. Post-translationally, an interchain disulfide bond is present in what becomes position 596 of the T isoform. As to expression, found in the synapses and to a lower extent in extrajunctional areas of muscle and nerve, and on erythrocyte membranes.

The protein resides in the cell membrane. The protein localises to the synapse. It carries out the reaction acetylcholine + H2O = choline + acetate + H(+). In terms of biological role, terminates signal transduction at the neuromuscular junction by rapid hydrolysis of the acetylcholine released into the synaptic cleft. May be involved in cell-cell interactions. In Torpedo marmorata (Marbled electric ray), this protein is Acetylcholinesterase (ache).